A 219-amino-acid polypeptide reads, in one-letter code: Histone H1.4 (219 aa).

The segment covering 1–15 (MSETAPAAPAAPAPA) has biased composition (low complexity). Residues 1 to 41 (MSETAPAAPAAPAPAEKTPVKKKARKSAGAAKRKASGPPVS) form a disordered region. Ser-2 is subject to N-acetylserine. At Ser-2 the chain carries Phosphoserine. Lys-17 is subject to N6-acetyllysine. Phosphothreonine is present on Thr-18. Over residues 20–35 (VKKKARKSAGAAKRKA) the composition is skewed to basic residues. Lys-26 bears the N6-acetyllysine; alternate mark. Position 26 is an N6-methyllysine; alternate (Lys-26). Lys-34 carries the N6-(beta-hydroxybutyryl)lysine; alternate modification. The residue at position 34 (Lys-34) is an N6-succinyllysine; alternate. Position 36 is a phosphoserine (Ser-36). An H15 domain is found at 36–109 (SGPPVSELIT…GASGSFKLNK (74 aa)). An N6-(beta-hydroxybutyryl)lysine modification is found at Lys-52. Residue Arg-54 is modified to Citrulline. Lys-64, Lys-85, Lys-90, and Lys-106 each carry N6-(beta-hydroxybutyryl)lysine. Positions 92 to 219 (TLVQTKGTGA…KPKKAAAKKK (128 aa)) are disordered. The span at 119 to 140 (KAKKAGAAKAKKPAGAAKKPKK) shows a compositional bias: basic residues. Residue Thr-146 is modified to Phosphothreonine. 2 stretches are compositionally biased toward basic residues: residues 149–160 (KSAKKTPKKAKK) and 168–185 (KKAKSPKKAKAAKPKKAP). Ser-150 is modified (ADP-ribosylserine). Phosphoserine is present on Ser-187. Positions 192–219 (KAVKPKAAKPKTAKPKAAKPKKAAAKKK) are enriched in basic residues.

It belongs to the histone H1/H5 family. Post-translationally, H1 histones are progressively phosphorylated during the cell cycle, becoming maximally phosphorylated during late G2 phase and M phase, and being dephosphorylated sharply thereafter. In terms of processing, acetylated at Lys-26. Deacetylated at Lys-26 by SIRT1. Citrullination at Arg-54 (H1R54ci) by PADI4 takes place within the DNA-binding site of H1 and results in its displacement from chromatin and global chromatin decondensation, thereby promoting pluripotency and stem cell maintenance. Post-translationally, ADP-ribosylated on Ser-150 in response to DNA damage.

It is found in the nucleus. The protein resides in the chromosome. Its function is as follows. Histone H1 protein binds to linker DNA between nucleosomes forming the macromolecular structure known as the chromatin fiber. Histones H1 are necessary for the condensation of nucleosome chains into higher-order structured fibers. Also acts as a regulator of individual gene transcription through chromatin remodeling, nucleosome spacing and DNA methylation. The protein is Histone H1.4 of Homo sapiens (Human).